The primary structure comprises 814 residues: MRVSLSWLKQLVQVTDSVEALAHRLSMAGFEEEEIEDLSARAKGVVVGFVKDREKHPNADKLSVCQVDIGSEESIQIVCGAKNVRAGLHVPVAMVGAELPAVNLTIKSGELRGVSSNGMICSLSELGLATESDGIAELDALTDELPALGAPVAPMLGLDDTVLELAITANRPDGLSMVGIAREVAALTGSALTLPVLTLKPAHELLQASAASAEAMQAGGLYGITLIEGVDGSQVSPTWVQQRLERAGINRVNAVVDITNVVMLEQGQPLHAFDADALEQLTGKPVNAASFGLRQAREGEAFIGLDGRELSLVARAQVVTCHDLPIALAGVMGSKASGVTAATGRIWLESAMFSPAAVRTTARSVGLRTDASARFEKGLPKEMTLACSIRALELLKELFPCEAKGLWVCGDSAADASSVLLRRNALHQLLGPIEDEEGSSDLADAVVEQCLTALGSELSPSDEGWNVIAPPSRRLDLAREIDLIEEVARLVGFDRFGAHLPDPLAPGALTPAQQAERRLRTLFCGAGLQEITTLSLVSASDSDPRIAISNPLLAETSHLRTNLWEEHLAVCVRNLKASQPGCWIFELGTTYAGSADAVEESRLLSGVICGEQRLERWTTSGKPAPPDYYAARGRLTEVMQALKLDVSDRRLTDDSRLHPGRAATLVLEGRPLGCFGQLHPELAASQNLPEATFLFELDLTRLVESATRRNRWVPAFKAFPTVPASERDLAVVVDRSQAASDLMQSIRKAGKPLLEAVTLIDRFEGDQLGENKASQAFRLRYRHQSETLTDDQVQPVHDKVRNALVKQHGAELRS.

A tRNA-binding domain is found at 39 to 153 (SARAKGVVVG…ELPALGAPVA (115 aa)). Residues 414 to 498 (ADASSVLLRR…RLVGFDRFGA (85 aa)) enclose the B5 domain. Mg(2+) contacts are provided by D476, D482, E485, and E486. Residues 720–813 (PTVPASERDL…LVKQHGAELR (94 aa)) form the FDX-ACB domain.

It belongs to the phenylalanyl-tRNA synthetase beta subunit family. Type 1 subfamily. In terms of assembly, tetramer of two alpha and two beta subunits. Requires Mg(2+) as cofactor.

Its subcellular location is the cytoplasm. It catalyses the reaction tRNA(Phe) + L-phenylalanine + ATP = L-phenylalanyl-tRNA(Phe) + AMP + diphosphate + H(+). The polypeptide is Phenylalanine--tRNA ligase beta subunit (Parasynechococcus marenigrum (strain WH8102)).